The chain runs to 132 residues: MVNDTIADMLTRVRNANLARHQIVQVPSTKMTKNIADVLLEEGFIQNFEEVGDGINKQLLLSLKYKGKEREPVITALKRISRPGLRVYANRKELPRVLGGLGIAVISTSRGVLTDNKARHQGLGGEVLCYIW.

This sequence belongs to the universal ribosomal protein uS8 family. In terms of assembly, part of the 30S ribosomal subunit.

It localises to the plastid. Its subcellular location is the chloroplast. Functionally, one of the primary rRNA binding proteins, it binds directly to 16S rRNA central domain where it helps coordinate assembly of the platform of the 30S subunit. The sequence is that of Small ribosomal subunit protein uS8c (rps8) from Rhodomonas salina (Cryptomonas salina).